The primary structure comprises 122 residues: Large ribosomal subunit protein uL14 (122 aa).

This sequence belongs to the universal ribosomal protein uL14 family. Part of the 50S ribosomal subunit. Forms a cluster with proteins L3 and L19. In the 70S ribosome, L14 and L19 interact and together make contacts with the 16S rRNA in bridges B5 and B8.

In terms of biological role, binds to 23S rRNA. Forms part of two intersubunit bridges in the 70S ribosome. In Streptomyces avermitilis (strain ATCC 31267 / DSM 46492 / JCM 5070 / NBRC 14893 / NCIMB 12804 / NRRL 8165 / MA-4680), this protein is Large ribosomal subunit protein uL14.